Here is a 351-residue protein sequence, read N- to C-terminus: Molybdenum import ATP-binding protein ModC (351 aa).

The region spanning 1–229 (MLKINVKKQL…PLFLPWKLED (229 aa)) is the ABC transporter domain. 31 to 38 (GLSGSGKT) is an ATP binding site. The 63-residue stretch at 289–351 (KTSIRNILHG…FAQIKAVSVL (63 aa)) folds into the Mop domain.

The protein belongs to the ABC transporter superfamily. Molybdate importer (TC 3.A.1.8) family. The complex is composed of two ATP-binding proteins (ModC), two transmembrane proteins (ModB) and a solute-binding protein (ModA).

Its subcellular location is the cell inner membrane. The enzyme catalyses molybdate(out) + ATP + H2O = molybdate(in) + ADP + phosphate + H(+). Functionally, part of the ABC transporter complex ModABC involved in molybdenum import. Responsible for energy coupling to the transport system. This is Molybdenum import ATP-binding protein ModC from Pasteurella multocida (strain Pm70).